A 77-amino-acid polypeptide reads, in one-letter code: Tachyplesin-2 (77 aa).

Positions 1-23 (MKKLVIALCLMMVLAVMVEEAEA) are cleaved as a signal peptide. Disulfide bonds link Cys26–Cys39 and Cys30–Cys35. An Arginine amide modification is found at Arg40. Residues 41–77 (GKRNEVRQYRDRGYDVRAIPDETFFTRQDEDEDDDEE) constitute a propeptide that is removed on maturation.

It belongs to the tachyplesin/polyphemusin family. Hemocytes.

It is found in the secreted. Its function is as follows. Significantly inhibits the growth of Gram-negative and Gram-positive bacteria. The chain is Tachyplesin-2 from Tachypleus tridentatus (Japanese horseshoe crab).